The chain runs to 70 residues: uncharacterized protein (70 aa).

This is an uncharacterized protein from Sinorhizobium fredii (strain NBRC 101917 / NGR234).